The following is a 192-amino-acid chain: Adenylate kinase (192 aa).

Position 12–17 (12–17 (GSGKTT)) interacts with ATP. The tract at residues 34 to 63 (STGDLLRAEVASGSELGKTIDSFISKGNLV) is NMP. Residues threonine 35, arginine 40, 61-63 (NLV), 88-91 (GYPR), and glutamine 95 contribute to the AMP site. The segment at 130-136 (GRNRGAD) is LID. Arginine 131 serves as a coordination point for ATP. Positions 133 and 145 each coordinate AMP. An ATP-binding site is contributed by arginine 173.

Belongs to the adenylate kinase family. Monomer.

It is found in the cytoplasm. The enzyme catalyses AMP + ATP = 2 ADP. Its pathway is purine metabolism; AMP biosynthesis via salvage pathway; AMP from ADP: step 1/1. Its function is as follows. Catalyzes the reversible transfer of the terminal phosphate group between ATP and AMP. Plays an important role in cellular energy homeostasis and in adenine nucleotide metabolism. This Campylobacter jejuni subsp. jejuni serotype O:2 (strain ATCC 700819 / NCTC 11168) protein is Adenylate kinase.